We begin with the raw amino-acid sequence, 417 residues long: Secreted aspartic protease 4 (417 aa).

The signal sequence occupies residues 1-18; sequence MFLQNILSVLAFALLIDA. Residues 19 to 75 constitute a propeptide, activation peptide; it reads APVKRSTGFVTLDFNVKRSLVDPKDPTVEVKRSPLFLDIEPTEIPVDDTGRNDVGKR. A Peptidase A1 domain is found at 89-403; that stretch reads YSADITIGSN…DLDDRKISMA (315 aa). Residue Asp-107 is part of the active site. 107 to 109 lines the pepstatin A pocket; it reads DTG. Cysteines 122 and 134 form a disulfide. N-linked (GlcNAc...) asparagine glycosylation occurs at Asn-137. 160-161 contributes to the pepstatin A binding site; the sequence is AD. Residue Asp-267 coordinates Zn(2+). Asp-293 is a catalytic residue. Position 293–297 (293–297) interacts with pepstatin A; it reads DSGTT. An intrachain disulfide couples Cys-331 to Cys-369.

Belongs to the peptidase A1 family. In terms of assembly, monomer.

Its subcellular location is the secreted. The catalysed reaction is Preferential cleavage at the carboxyl of hydrophobic amino acids, but fails to cleave 15-Leu-|-Tyr-16, 16-Tyr-|-Leu-17 and 24-Phe-|-Phe-25 of insulin B chain. Activates trypsinogen, and degrades keratin.. Its activity is regulated as follows. Activity is inhibited by squash aspartic peptidase inhibitor (SQAPI). Secreted aspartic peptidases (SAPs) are a group of ten acidic hydrolases considered as key virulence factors. These enzymes supply the fungus with nutrient amino acids as well as are able to degrade the selected host's proteins involved in the immune defense. Moreover, acts toward human hemoglobin though limited proteolysis to generate a variety of antimicrobial hemocidins, enabling to compete with the other microorganisms of the same physiological niche using the microbicidal peptides generated from the host protein. In terms of biological role, plays a key role in defense against host by cleaving histatin-5 (Hst 5), a peptide from human saliva that carries out fungicidal activity. The cleavage rate decreases in an order of SAP2 &gt; SAP9 &gt; SAP3 &gt; SAP7 &gt; SAP4 &gt; SAP1 &gt; SAP8. The first cleavage occurs between residues 'Lys-17' and 'His-18' of Hst 5, giving DSHAKRHHGYKRKFHEK and HHSHRGY peptides. Simultaneously, the DSHAKRHHGY and KRKFHEKHHSHRGY peptides are also formed. This is Secreted aspartic protease 4 from Candida albicans (strain SC5314 / ATCC MYA-2876) (Yeast).